The following is a 116-amino-acid chain: U16-barytoxin-Tl1f (116 aa).

Positions 1–20 (MKTIIVFLSLLVLATKFGDA) are cleaved as a signal peptide. A propeptide spanning residues 21–74 (NEGVNQEQMKEVIQNEFREDFLNEMAAMSLLQQLEAIESTLLEKEADRNSRQKR) is cleaved from the precursor. Disulfide bonds link C75-C90, C82-C95, and C89-C110. The N-linked (GlcNAc...) asparagine glycan is linked to N85.

Belongs to the neurotoxin 14 (magi-1) family. 06 (ICK-Trit) subfamily. Expressed by the venom gland.

The protein resides in the secreted. In terms of biological role, ion channel inhibitor. This chain is U16-barytoxin-Tl1f, found in Trittame loki (Brush-footed trapdoor spider).